The following is a 184-amino-acid chain: UPF0149 protein Avin_47340 (184 aa).

It belongs to the UPF0149 family.

The chain is UPF0149 protein Avin_47340 from Azotobacter vinelandii (strain DJ / ATCC BAA-1303).